Reading from the N-terminus, the 393-residue chain is Dual specificity mitogen-activated protein kinase kinase 1 (393 aa).

The tract at residues 1–26 is disordered; sequence MPKKKPTPIQLNPTPDGSAVNGTSSA. Positions 9-26 are enriched in polar residues; sequence IQLNPTPDGSAVNGTSSA. The Protein kinase domain occupies 68–361; the sequence is FEKISELGAG…LKQLLVHAFI (294 aa). ATP contacts are provided by residues 74–82 and Lys-97; that span reads LGAGNGGVV. Asp-190 serves as the catalytic Proton acceptor. Residues Ser-218 and Ser-222 each carry the phosphoserine; by RAF modification. Residues 270–307 form an RAF1-binding region; it reads ELELLFGCQVEGDAAETPPRPRTPGRPLSSYGMDSRPP. Residue Thr-286 is modified to Phosphothreonine. A Phosphothreonine; by MAPK1 modification is found at Thr-292. Residue Ser-298 is modified to Phosphoserine; by PAK.

The protein belongs to the protein kinase superfamily. STE Ser/Thr protein kinase family. MAP kinase kinase subfamily. In terms of assembly, found in a complex with at least BRAF, HRAS, MAP2K1, MAPK3/ERK1 and RGS14. Forms a heterodimer with MAP2K2/MEK2. Forms heterodimers with KSR2 which further dimerize to form tetramers. Interacts with KSR1 or KSR2 and BRAF; the interaction with KSR1 or KSR2 mediates KSR1-BRAF or KSR2-BRAF dimerization. Interacts with ARBB2, LAMTOR3, MAPK1/ERK2 and RAF1. Interacts with MAPK1/ERK2. Interacts with MORG1. Interacts with PPARG. Interacts with isoform 1 of VRK2. Interacts with SGK1. Interacts with BIRC6/bruce. Interacts with KAT7; the interaction promotes KAT7 phosphorylation. Interacts with RAF1 and NEK10; the interaction is required for ERK1/2-signaling pathway activation in response to UV irradiation. Interacts with TRAF3IP3. Interacts with MOS. Phosphorylation at Ser-218 and Ser-222 by MAP kinase kinase kinases (BRAF or MEKK1) positively regulates the kinase activity. Also phosphorylated at Thr-292 by MAPK1/ERK2 and at Ser-298 by PAK. MAPK1/ERK2 phosphorylation of Thr-292 occurs in response to cellular adhesion and leads to inhibition of Ser-298 phosphorylation by PAK. Autophosphorylated at Ser-218 and Ser-222, autophosphosphorylation is promoted by NEK10 following UV irradiation.

The protein localises to the cytoplasm. It localises to the cytoskeleton. It is found in the microtubule organizing center. The protein resides in the centrosome. Its subcellular location is the spindle pole body. The protein localises to the nucleus. It localises to the membrane. The catalysed reaction is L-seryl-[protein] + ATP = O-phospho-L-seryl-[protein] + ADP + H(+). It carries out the reaction L-threonyl-[protein] + ATP = O-phospho-L-threonyl-[protein] + ADP + H(+). It catalyses the reaction L-tyrosyl-[protein] + ATP = O-phospho-L-tyrosyl-[protein] + ADP + H(+). With respect to regulation, ras proteins such as HRAS mediate the activation of RAF proteins such as RAF1 or BRAF which in turn activate extracellular signal-regulated kinases (ERK) through MAPK (mitogen-activated protein kinases) and ERK kinases MAP2K1/MEK1 and MAP2K2/MEK2. Activation occurs through phosphorylation of Ser-218 and Ser-222. MAP2K1/MEK1 binds KSR1 or KSR2 releasing the inhibitory intramolecular interaction between KSR1 or KSR2 protein kinase and N-terminal domains. This allows KSR1 or KSR2 dimerization with BRAF leading to BRAF activation and phosphorylation of MAP2K1. MAP2K1/MEK1 is also the target of negative feed-back regulation by its substrate kinases, such as MAPK1/ERK2. These phosphorylate MAP2K1/MEK1 on Thr-292, thereby facilitating dephosphorylation of the activating residues Ser-218 and Ser-222. Inhibited by serine/threonine phosphatase 2A. Dual specificity protein kinase which acts as an essential component of the MAP kinase signal transduction pathway. Binding of extracellular ligands such as growth factors, cytokines and hormones to their cell-surface receptors activates RAS and this initiates RAF1 activation. RAF1 then further activates the dual-specificity protein kinases MAP2K1/MEK1 and MAP2K2/MEK2. Both MAP2K1/MEK1 and MAP2K2/MEK2 function specifically in the MAPK/ERK cascade, and catalyze the concomitant phosphorylation of a threonine and a tyrosine residue in a Thr-Glu-Tyr sequence located in the extracellular signal-regulated kinases MAPK3/ERK1 and MAPK1/ERK2, leading to their activation and further transduction of the signal within the MAPK/ERK cascade. Activates BRAF in a KSR1 or KSR2-dependent manner; by binding to KSR1 or KSR2 releases the inhibitory intramolecular interaction between KSR1 or KSR2 protein kinase and N-terminal domains which promotes KSR1 or KSR2-BRAF dimerization and BRAF activation. Depending on the cellular context, this pathway mediates diverse biological functions such as cell growth, adhesion, survival and differentiation, predominantly through the regulation of transcription, metabolism and cytoskeletal rearrangements. One target of the MAPK/ERK cascade is peroxisome proliferator-activated receptor gamma (PPARG), a nuclear receptor that promotes differentiation and apoptosis. MAP2K1/MEK1 has been shown to export PPARG from the nucleus. The MAPK/ERK cascade is also involved in the regulation of endosomal dynamics, including lysosome processing and endosome cycling through the perinuclear recycling compartment (PNRC), as well as in the fragmentation of the Golgi apparatus during mitosis. The protein is Dual specificity mitogen-activated protein kinase kinase 1 (MAP2K1) of Cricetulus griseus (Chinese hamster).